The primary structure comprises 437 residues: Triacylglycerol lipase (437 aa).

Residues 1–100 form the PE domain; sequence MVSYVVALPE…AELANASLLQ (100 aa). Positions 101–206 are linker; that stretch reads SEFASGIGNG…GNSPPPLLNS (106 aa). Positions 207–437 are lipase; the sequence is LLGQTVQYTT…QINQQLGIAA (231 aa). The Involved in the stabilization of the negatively charged intermediate by the formation of the oxyanion hole motif lies at 239 to 241; it reads HGG. Residues S309, D383, and H413 contribute to the active site.

This sequence in the N-terminal section; belongs to the mycobacterial PE family. PGRS subfamily. It in the C-terminal section; belongs to the 'GDXG' lipolytic enzyme family. As to quaternary structure, forms aggregates via its PE domain. In terms of processing, upon export, the PE domain is removed by proteolytic cleavage. Cleavage occurs at the cell surface and is not required for secretion. Cleaved after Gly-149 by the aspartic protease PecA. May also be cleaved before Leu-98 and after Ala-136.

The protein resides in the cytoplasm. It is found in the secreted. It localises to the cell wall. Its subcellular location is the cell surface. It catalyses the reaction a triacylglycerol + H2O = a diacylglycerol + a fatty acid + H(+). The catalysed reaction is 1,2,3-tri-(9Z-octadecenoyl)-glycerol + H2O = di-(9Z)-octadecenoylglycerol + (9Z)-octadecenoate + H(+). The enzyme catalyses an acetyl ester + H2O = an aliphatic alcohol + acetate + H(+). It carries out the reaction a butanoate ester + H2O = an aliphatic alcohol + butanoate + H(+). It catalyses the reaction a hexanoate ester + H2O = an aliphatic alcohol + hexanoate + H(+). The catalysed reaction is an octanoate ester + H2O = an aliphatic alcohol + octanoate + H(+). The enzyme catalyses a dodecanoate ester + H2O = an aliphatic alcohol + dodecanoate + H(+). It carries out the reaction a tetradecanoate ester + H2O = an aliphatic alcohol + tetradecanoate + H(+). It catalyses the reaction hexadecanoate ester + H2O = an aliphatic alcohol + hexadecanoate + H(+). The catalysed reaction is octadecanoate ester + H2O = an aliphatic alcohol + octadecanoate + H(+). The enzyme catalyses 1-butyrylglycerol + H2O = butanoate + glycerol + H(+). It carries out the reaction 1,2,3-tributanoylglycerol + H2O = dibutanoylglycerol + butanoate + H(+). Its activity is regulated as follows. PE domain down-regulates lipase activity. Cleavage by PecA does not affect surface localization and lipase activity. With respect to regulation, inhibited by diethyl-p-nitrophenyl phosphate (E-600) at 0.5 uM, by phenylmethanesulfonyl fluoride at 5 mM and by polyethylene glycol sorbitan monolaurate (Tween 20). Also inhibited by CaCl(2), CoCl(2), MnCl(2), ZnCl(2) and MgCl(2). Inhibited by several hydrazides compounds. Stimulated slightly by SDS at concentrations up to 2 mM, above which the activity is severely inhibited. Functionally, catalyzes the hydrolysis of both intracellular and extracellular triacylglycerol (TAG). In vitro, can also hydrolyze p-nitrophenyl (pNP) esters with various chain lengths, including pNP-acetate (C2), pNP-butyrate (C4), pNP-caproate (C6), pNP-caprylate (C8), pNP-laurate (C12), pNP-myristate (C14), pNP-palmitate (C16) and pNP-stearate (C18). Also hydrolyzes monobutyrin, tributyrin and trioctanoin. Overexpression results in increase of virulence characterized by reduced survival of infected mouse and increased burden of bacilli in the lungs. Hydrolyzes internal or host-derived TAG depending on its localization. In terms of biological role, hydrolyzes TAG that accumulates within mycobacterial intracytosolic lipid inclusions (ILI). Probably responsible for the utilization of stored long-chain TAG during the dormancy and reactivation stages of the pathogen. Hydrolyzes host-derived TAG. This Mycobacterium tuberculosis (strain ATCC 25618 / H37Rv) protein is Triacylglycerol lipase.